The chain runs to 820 residues: Phospholipase D alpha 3 (820 aa).

The 133-residue stretch at 1-133 (MTEQLLLHGT…ITGQPIDRWL (133 aa)) folds into the C2 domain. Asp194 contacts Ca(2+). Residues 334-371 (TMFTHHQKTIVVDSEVDGSLTKRRIVSFLGGIDLCDGR) enclose the PLD phosphodiesterase 1 domain. Residues His339, Lys341, and Asp346 contribute to the active site. His339 contributes to the a 1,2-diacyl-sn-glycero-3-phosphate binding site. Ca(2+) contacts are provided by His377 and His411. Gln528 and His667 together coordinate a 1,2-diacyl-sn-glycero-3-phosphate. The PLD phosphodiesterase 2 domain maps to 662 to 689 (FMIYVHSKMMIVDDEYIIIGSANINQRS). Active-site residues include His667, Lys669, and Asp674. Glu730 contributes to the Ca(2+) binding site.

The protein belongs to the phospholipase D family. C2-PLD subfamily. Ca(2+) is required as a cofactor. As to expression, expressed in buds, flowers, siliques, stems, old leaves and roots. Expressed in the sieve elements.

The protein resides in the cytoplasm. It localises to the membrane. The enzyme catalyses a 1,2-diacyl-sn-glycero-3-phosphocholine + H2O = a 1,2-diacyl-sn-glycero-3-phosphate + choline + H(+). In terms of biological role, hydrolyzes glycerol-phospholipids at the terminal phosphodiesteric bond to generate phosphatidic acids (PA). Active with phosphatidylcholine (PC), phosphatidylethanolamine (PE), phosphatidylglycerol (PG), and phosphatidylserine (PS) as substrates. No activity toward phosphatidylinositol (PI) or PIP2. Positively mediates plant responses to hyperosmotic stresses and promotes root growth, flowering, and stress avoidance. Not involved in the abscisic acid regulation of stomatal movement and transpirational water loss. This is Phospholipase D alpha 3 from Arabidopsis thaliana (Mouse-ear cress).